We begin with the raw amino-acid sequence, 308 residues long: tRNA pseudouridine synthase B (308 aa).

The active-site Nucleophile is the aspartate 45.

Belongs to the pseudouridine synthase TruB family. Type 1 subfamily.

It catalyses the reaction uridine(55) in tRNA = pseudouridine(55) in tRNA. Responsible for synthesis of pseudouridine from uracil-55 in the psi GC loop of transfer RNAs. The sequence is that of tRNA pseudouridine synthase B from Gloeothece citriformis (strain PCC 7424) (Cyanothece sp. (strain PCC 7424)).